The chain runs to 186 residues: ATP synthase subunit delta, chloroplastic (186 aa).

The protein belongs to the ATPase delta chain family. As to quaternary structure, F-type ATPases have 2 components, F(1) - the catalytic core - and F(0) - the membrane proton channel. F(1) has five subunits: alpha(3), beta(3), gamma(1), delta(1), epsilon(1). CF(0) has four main subunits: a(1), b(1), b'(1) and c(10-14). The alpha and beta chains form an alternating ring which encloses part of the gamma chain. F(1) is attached to F(0) by a central stalk formed by the gamma and epsilon chains, while a peripheral stalk is formed by the delta, b and b' chains.

The protein resides in the plastid. It localises to the chloroplast thylakoid membrane. Functionally, f(1)F(0) ATP synthase produces ATP from ADP in the presence of a proton or sodium gradient. F-type ATPases consist of two structural domains, F(1) containing the extramembraneous catalytic core and F(0) containing the membrane proton channel, linked together by a central stalk and a peripheral stalk. During catalysis, ATP synthesis in the catalytic domain of F(1) is coupled via a rotary mechanism of the central stalk subunits to proton translocation. This protein is part of the stalk that links CF(0) to CF(1). It either transmits conformational changes from CF(0) to CF(1) or is implicated in proton conduction. The protein is ATP synthase subunit delta, chloroplastic of Pyropia yezoensis (Susabi-nori).